Here is a 381-residue protein sequence, read N- to C-terminus: MAAPVLRCVRKLLKLVDFTPVPRRYRYKKKWATTEPQFTASRLALQNFDMTYSVQFGDLWPSIRVSLLSEQKYGALVNNFAAWDSVSAKLEQLSAKDFVSEAISHQKLEPESGLSPTPSLDCSPNLRCFTFSRGDVSRFPPARLGSLGLMDYYLMDAASLLPVLALGLQHGDTVLDLCAAPGGKTLALLQTGCCRNLAANDLSTSRTGRLQKVLHSYVPQDIREGNQVRVTSWDGRKWGELEGDTYDRVLVDVPCTTDRHSLHEEENNIFQRSRKKERQMLPMLQVQLLAAGLLATKPGGHVVYSTCSLSHLQNEYVVQGAIELLANQYNIKVQVEDLSHFRKLFMDTFCFFPSCQVGELVIPNLMVNFGPMYFCKLHRLP.

The transit peptide at 1-25 (MAAPVLRCVRKLLKLVDFTPVPRRY) directs the protein to the mitochondrion. S-adenosyl-L-methionine-binding residues include glycine 182, glycine 183, lysine 184, and aspartate 201. Serine 203 carries the post-translational modification Phosphoserine. 4 residues coordinate S-adenosyl-L-methionine: arginine 206, aspartate 234, glycine 235, and aspartate 252. Cysteine 307 (nucleophile) is an active-site residue.

This sequence belongs to the class I-like SAM-binding methyltransferase superfamily. RsmB/NOP family. As to quaternary structure, heterodimer with MTERFD2/MTERF4; this interaction seems to be required for NSUN4 recruitment to the mitochondrial large ribosomal subunit.

Its subcellular location is the mitochondrion. It catalyses the reaction a cytidine in rRNA + S-adenosyl-L-methionine = a 5-methylcytidine in rRNA + S-adenosyl-L-homocysteine + H(+). The catalysed reaction is a cytidine in mRNA + S-adenosyl-L-methionine = a 5-methylcytidine in mRNA + S-adenosyl-L-homocysteine + H(+). Its function is as follows. Mitochondrial RNA cytosine C(5)-methyltransferase that methylates cytosine to 5-methylcytosine (m5C) in various RNAs, such as rRNAs, mRNAs and some long non-coding RNAs (lncRNAs). Involved in mitochondrial ribosome small subunit (SSU) maturation by catalyzing methylation of mitochondrial 12S rRNA; the function is independent of MTERFD2/MTERF4 and assembled mitochondrial ribosome large subunit (LSU). Targeted to LSU by MTERFD2/MTERF4 and probably is involved in a final step in ribosome biogenesis to ensure that SSU and LSU are assembled. In vitro can methylate 16S rRNA of the LSU; the methylation is enhanced by MTERFD/MTERF4. Also acts as a regulator of innate immunity by marking double-stranded mitochondrial RNAs(mt-dsRNAs) generated in response to stress: catalyzes m5C modification on mitochondrial RNAs, such as a mRNAs and lncRNAs, with a preference for the termini of light-strand lncRNAs, promoting their degradation and cytosolic release. Modified light-strand lncRNAs are then recognized by C1QBP reader and recruited to the mitochondrial degradosome complex, which promotes their degradation. This chain is 5-cytosine rRNA methyltransferase NSUN4, found in Mus musculus (Mouse).